The following is a 202-amino-acid chain: Probable nicotinate-nucleotide adenylyltransferase (202 aa).

It belongs to the NadD family.

It catalyses the reaction nicotinate beta-D-ribonucleotide + ATP + H(+) = deamido-NAD(+) + diphosphate. The protein operates within cofactor biosynthesis; NAD(+) biosynthesis; deamido-NAD(+) from nicotinate D-ribonucleotide: step 1/1. Catalyzes the reversible adenylation of nicotinate mononucleotide (NaMN) to nicotinic acid adenine dinucleotide (NaAD). The polypeptide is Probable nicotinate-nucleotide adenylyltransferase (Bacteroides thetaiotaomicron (strain ATCC 29148 / DSM 2079 / JCM 5827 / CCUG 10774 / NCTC 10582 / VPI-5482 / E50)).